Reading from the N-terminus, the 448-residue chain is Probable glycine dehydrogenase (decarboxylating) subunit 1 (448 aa).

Belongs to the GcvP family. N-terminal subunit subfamily. In terms of assembly, the glycine cleavage system is composed of four proteins: P, T, L and H. In this organism, the P 'protein' is a heterodimer of two subunits.

The enzyme catalyses N(6)-[(R)-lipoyl]-L-lysyl-[glycine-cleavage complex H protein] + glycine + H(+) = N(6)-[(R)-S(8)-aminomethyldihydrolipoyl]-L-lysyl-[glycine-cleavage complex H protein] + CO2. Its function is as follows. The glycine cleavage system catalyzes the degradation of glycine. The P protein binds the alpha-amino group of glycine through its pyridoxal phosphate cofactor; CO(2) is released and the remaining methylamine moiety is then transferred to the lipoamide cofactor of the H protein. The sequence is that of Probable glycine dehydrogenase (decarboxylating) subunit 1 from Bacillus licheniformis (strain ATCC 14580 / DSM 13 / JCM 2505 / CCUG 7422 / NBRC 12200 / NCIMB 9375 / NCTC 10341 / NRRL NRS-1264 / Gibson 46).